A 167-amino-acid chain; its full sequence is Small ribosomal subunit protein uS5 (167 aa).

Residues 12–75 (LQEKLIAVNR…EKARRNMVTV (64 aa)) enclose the S5 DRBM domain.

The protein belongs to the universal ribosomal protein uS5 family. As to quaternary structure, part of the 30S ribosomal subunit. Contacts proteins S4 and S8.

Functionally, with S4 and S12 plays an important role in translational accuracy. Its function is as follows. Located at the back of the 30S subunit body where it stabilizes the conformation of the head with respect to the body. This is Small ribosomal subunit protein uS5 from Shewanella denitrificans (strain OS217 / ATCC BAA-1090 / DSM 15013).